Here is a 297-residue protein sequence, read N- to C-terminus: Probable GTP 3',8-cyclase (297 aa).

Positions 4–227 (RYGRQIRSFR…MQNRKKYVID (224 aa)) constitute a Radical SAM core domain. Arg-13 lines the GTP pocket. Residues Cys-20 and Cys-24 each contribute to the [4Fe-4S] cluster site. S-adenosyl-L-methionine is bound at residue Tyr-26. Cys-27 is a binding site for [4Fe-4S] cluster. Residue Lys-61 coordinates GTP. Gly-65 provides a ligand contact to S-adenosyl-L-methionine. Thr-91 contributes to the GTP binding site. Ser-115 is an S-adenosyl-L-methionine binding site. Residue Lys-152 participates in GTP binding. [4Fe-4S] cluster contacts are provided by Cys-243 and Cys-246. A GTP-binding site is contributed by 248–250 (RIR). A [4Fe-4S] cluster-binding site is contributed by Cys-260.

This sequence belongs to the radical SAM superfamily. MoaA family. The cofactor is [4Fe-4S] cluster.

The enzyme catalyses GTP + AH2 + S-adenosyl-L-methionine = (8S)-3',8-cyclo-7,8-dihydroguanosine 5'-triphosphate + 5'-deoxyadenosine + L-methionine + A + H(+). The protein operates within cofactor biosynthesis; molybdopterin biosynthesis. Functionally, catalyzes the cyclization of GTP to (8S)-3',8-cyclo-7,8-dihydroguanosine 5'-triphosphate. The polypeptide is Probable GTP 3',8-cyclase (Methanococcus maripaludis (strain DSM 14266 / JCM 13030 / NBRC 101832 / S2 / LL)).